We begin with the raw amino-acid sequence, 102 residues long: Aspartyl/glutamyl-tRNA(Asn/Gln) amidotransferase subunit C (102 aa).

The protein belongs to the GatC family. Heterotrimer of A, B and C subunits.

The catalysed reaction is L-glutamyl-tRNA(Gln) + L-glutamine + ATP + H2O = L-glutaminyl-tRNA(Gln) + L-glutamate + ADP + phosphate + H(+). It carries out the reaction L-aspartyl-tRNA(Asn) + L-glutamine + ATP + H2O = L-asparaginyl-tRNA(Asn) + L-glutamate + ADP + phosphate + 2 H(+). Allows the formation of correctly charged Asn-tRNA(Asn) or Gln-tRNA(Gln) through the transamidation of misacylated Asp-tRNA(Asn) or Glu-tRNA(Gln) in organisms which lack either or both of asparaginyl-tRNA or glutaminyl-tRNA synthetases. The reaction takes place in the presence of glutamine and ATP through an activated phospho-Asp-tRNA(Asn) or phospho-Glu-tRNA(Gln). This chain is Aspartyl/glutamyl-tRNA(Asn/Gln) amidotransferase subunit C, found in Leuconostoc citreum (strain KM20).